A 90-amino-acid polypeptide reads, in one-letter code: Putative defensin-like protein 168 (90 aa).

A signal peptide spans 1 to 27 (MKYFTLFMISYIFISIFVFSHIHDVEA). Cystine bridges form between Cys-32–Cys-90, Cys-43–Cys-66, Cys-51–Cys-84, and Cys-64–Cys-86.

It belongs to the DEFL family.

The protein resides in the secreted. This chain is Putative defensin-like protein 168, found in Arabidopsis thaliana (Mouse-ear cress).